We begin with the raw amino-acid sequence, 210 residues long: HTH-type transcriptional regulator TtgR (210 aa).

The 61-residue stretch at 10–70 (QETRAQIIEA…ALLDSLHETH (61 aa)) folds into the HTH tetR-type domain. Positions 33-52 (TLADIAELAGVTRGAIYWHF) form a DNA-binding region, H-T-H motif.

In terms of assembly, homodimer.

Its function is as follows. Represses expression from the ttgABC operon promoter and its own expression. Binds to a promoter region between the divergently transcribed ttgR and ttgABC genes/operons; in the presence of chloramphenicol or tetracycline this binding no longer occurs and ttgR and ttgABC are derepressed. This suggests that TtgR binds these antibiotics. The polypeptide is HTH-type transcriptional regulator TtgR (ttgR) (Pseudomonas putida (strain DOT-T1E)).